A 543-amino-acid chain; its full sequence is MNNLTSTKFIFVTGGVVSSLGKGLAAASIGALLQARGFKICLRKLDPYLNIDPGTMSPIQHGEVFVTDDGAETDLDLGHYERFTGVKTTKNDNITTGKVYHNLLNKERKGDYLGQTVQIIPHVTDLINSFILHNTDALDFVICEIGGTVGDIESQPFLESIRQIGYKLSKNNTVFVHLTLVPYISATMELKTKPTQHSVKELSSVGIQPDIILYRSKIPLSQEQRDKIANLCNVSPTNIIPALDVKNIYELPISYHQYNLDTQILKHFNITSPEPNLDKWENILNISHVSTKTITIAIIGKYIKLLDAYKSLIEALEHAAIHNKTKLSIHWIDSRSLNNEITNTFDNVHAILIPGGFGDDGVEGKIIAIQYARINNIPFLGICMGMQLAIIEFARNVIHLEDANSTEFNFYCKNPVIHQLPELQQNLGGSMKLGSHPCYLKVDSKIFSIYKEQVINERRRHRYTVNLQYKDLLESHGLIFTGHSHHNNNDSLAEVIELKNHPWFIGVQFHPEFKSDPFQSHPLFMSFIQASLNYQETKRHKIS.

An amidoligase domain region spans residues 1 to 270 (MNNLTSTKFI…DTQILKHFNI (270 aa)). S18 lines the CTP pocket. UTP is bound at residue S18. Residues 19 to 24 (SLGKGL) and D76 contribute to the ATP site. Residues D76 and E144 each contribute to the Mg(2+) site. Residues 151–153 (DIE), 191–196 (KTKPTQ), and K227 each bind CTP. UTP is bound by residues 191-196 (KTKPTQ) and K227. Residues 295–537 (TIAIIGKYIK…IQASLNYQET (243 aa)) enclose the Glutamine amidotransferase type-1 domain. Position 356 (G356) interacts with L-glutamine. C383 functions as the Nucleophile; for glutamine hydrolysis in the catalytic mechanism. Residues 384 to 387 (MGMQ), E407, and R462 contribute to the L-glutamine site. Active-site residues include H510 and E512.

The protein belongs to the CTP synthase family. As to quaternary structure, homotetramer.

The catalysed reaction is UTP + L-glutamine + ATP + H2O = CTP + L-glutamate + ADP + phosphate + 2 H(+). It carries out the reaction L-glutamine + H2O = L-glutamate + NH4(+). It catalyses the reaction UTP + NH4(+) + ATP = CTP + ADP + phosphate + 2 H(+). The protein operates within pyrimidine metabolism; CTP biosynthesis via de novo pathway; CTP from UDP: step 2/2. With respect to regulation, allosterically activated by GTP, when glutamine is the substrate; GTP has no effect on the reaction when ammonia is the substrate. The allosteric effector GTP functions by stabilizing the protein conformation that binds the tetrahedral intermediate(s) formed during glutamine hydrolysis. Inhibited by the product CTP, via allosteric rather than competitive inhibition. Catalyzes the ATP-dependent amination of UTP to CTP with either L-glutamine or ammonia as the source of nitrogen. Regulates intracellular CTP levels through interactions with the four ribonucleotide triphosphates. The chain is CTP synthase from Ehrlichia ruminantium (strain Gardel).